A 319-amino-acid chain; its full sequence is Telomere-binding protein cav (319 aa).

The tract at residues Arg107–Glu312 is required for binding to Su(var)205. Disordered stretches follow at residues Trp141–Val163 and Pro186–Tyr248. 2 consecutive short sequence motifs (su(var)205-binding Pro-containing repeat) follow at residues Pro220–Met224 and Pro273–Glu279. Polar residues predominate over residues Ser291–Ser311. The tract at residues Ser291–Asn319 is disordered.

Interacts (via C-terminus) with Su(var)205 dimer (via hinge and chromoshadow domain) and with moi to form the terminin, telomere-capping, complex. Interacts with HP6, which is also part of the terminin complex.

It localises to the nucleus. Its subcellular location is the chromosome. The protein localises to the telomere. Functionally, binds to chromosome ends in a sequence-dependent manner and is required for telomere capping. This is Telomere-binding protein cav from Drosophila yakuba (Fruit fly).